Reading from the N-terminus, the 878-residue chain is von Willebrand factor A domain-containing protein DDB_G0267758 (878 aa).

The 134-residue stretch at 36–169 (GLFLTENNKK…TVKITLTITS (134 aa)) folds into the VIT domain. In terms of domain architecture, VWFA spans 316–496 (EFIFLIDCSG…ISLKPMFSNI (181 aa)). Residues 595 to 623 (SSSSSSSSSSSSSSSSSSSSSSSSSSSSS) are compositionally biased toward low complexity. Disordered regions lie at residues 595–638 (SSSS…HRLS) and 752–774 (SVKK…SKTK). Residues 624–635 (TTTATTNQNQIH) are compositionally biased toward polar residues.

The sequence is that of von Willebrand factor A domain-containing protein DDB_G0267758 from Dictyostelium discoideum (Social amoeba).